The chain runs to 413 residues: Histidine--tRNA ligase (413 aa).

Belongs to the class-II aminoacyl-tRNA synthetase family. As to quaternary structure, homodimer.

It localises to the cytoplasm. The enzyme catalyses tRNA(His) + L-histidine + ATP = L-histidyl-tRNA(His) + AMP + diphosphate + H(+). The sequence is that of Histidine--tRNA ligase from Fusobacterium nucleatum subsp. nucleatum (strain ATCC 25586 / DSM 15643 / BCRC 10681 / CIP 101130 / JCM 8532 / KCTC 2640 / LMG 13131 / VPI 4355).